The primary structure comprises 1173 residues: MRKAMFGKRERWVFGKVIEPLEIPNLIEIQLKSFKWFLEEGLLDVLKKYSPIKSQIQRPDSRKNEKGFSLEFVRTRIGNPKYNIQECKDKGLTYSVPLYVTVRITDLYSGEIKEEEAFFGYLPYMTDNASFIINGAERVIVNQLVRSPGVYFVDEPTKASSGSLPILVAHFLPVKGAWLEILLNPNKKVLQVRIDRRRKMNLFLLLKTLGYEDDLELLDLFVHDVDANDEYVLLEHVGSIILSDVKTRNELIAERGAVLTEALAKKIAESDVDVIKLPMPIAMSTLKAFHRTYGENIKSEDAYIEIFRKLRPGEIPRINAAKNYLHNLYFSPDRFDFSEVGRHKINSRLRKVYKEYLKEVKKTEVPEDIEYAEESTVLTELDIVLAARHLAQLESHPELLDTKDHLGNKRVRTVGELMQNEFEKAFVKIHKLLEEKLTIYTSFDKVTVQNLVNVRTLMTTLHQFFATSQLSQFMDQVNPLAELTHKRRLSAIGPGGLKREHARFEVRDVHHSHYGRMCPIETPEGANIGLMTSLSTYATIDKYGFLLTPYRKVKNGKVTDEIVYLAADEEELYNIAQSTIEVDDNGNIVESVVEVRHAGEIKYVEKEKVDLMAISPKQIVSVSTSLIPFLEHDDANRALMGSNMQRQAVPVIKPEAPIVGTGVEAIAARDSGYVVLAKHRGIVKKVDSRKIIIERIDEDGNPILSESGEPIQDVYTLHKFIRTNQDTTINQRPIVSQGETVEKGDPIADGPSTDMGELALGKNIFVAFLPWEGYNFEDAILVSQELLEEETFTTIHIEMYETVARDTQLGPEEITADIPNVSKELLKNLDENGIVRVGAYVSSGDILVGKVTPKGESDTTPEEKIIRSVFGDRGRDVKDTSLRVPHGVEGRVIDVKVFDKEEISELGSGVNKLVKVYVACRKPLDVGDKLAGRHGNKGVVSNIIPKEDMPFLPDGTPVQIVLSPLGVPSRMNVGQVLETHLGWLGQLTNRYFATPIFDGAKEDEIMEELYKARKAAGIDVGDSKKEKNGKVLLRDGRSGLPFDYPVVVGVMYMLKLVHIAKDKIHARSTGPYSLIHQQPLGGKAHFGGQRFGEMEVWALEAHGAAHTLNEVLTVKSDDIKGRNEVYKAILKGLNVPGPGIPESFKVLIKELQGLALDIRVYDQNGNELDVDKL.

It belongs to the RNA polymerase beta chain family. As to quaternary structure, the RNAP catalytic core consists of 2 alpha, 1 beta, 1 beta' and 1 omega subunit. When a sigma factor is associated with the core the holoenzyme is formed, which can initiate transcription.

It carries out the reaction RNA(n) + a ribonucleoside 5'-triphosphate = RNA(n+1) + diphosphate. Functionally, DNA-dependent RNA polymerase catalyzes the transcription of DNA into RNA using the four ribonucleoside triphosphates as substrates. This Kosmotoga olearia (strain ATCC BAA-1733 / DSM 21960 / TBF 19.5.1) protein is DNA-directed RNA polymerase subunit beta.